Reading from the N-terminus, the 907-residue chain is Valine--tRNA ligase (907 aa).

Positions 45 to 55 match the 'HIGH' region motif; sequence PNVTGSLHMGH. A 'KMSKS' region motif is present at residues 554 to 558; that stretch reads KMSKS. Lys557 provides a ligand contact to ATP. Positions 838–870 form a coiled coil; sequence GQLIDLEAERARLMKDVSKIEQDIEKLSAKLSN.

Belongs to the class-I aminoacyl-tRNA synthetase family. ValS type 1 subfamily. In terms of assembly, monomer.

The protein localises to the cytoplasm. It carries out the reaction tRNA(Val) + L-valine + ATP = L-valyl-tRNA(Val) + AMP + diphosphate. Catalyzes the attachment of valine to tRNA(Val). As ValRS can inadvertently accommodate and process structurally similar amino acids such as threonine, to avoid such errors, it has a 'posttransfer' editing activity that hydrolyzes mischarged Thr-tRNA(Val) in a tRNA-dependent manner. The protein is Valine--tRNA ligase of Bartonella henselae (strain ATCC 49882 / DSM 28221 / CCUG 30454 / Houston 1) (Rochalimaea henselae).